The following is a 72-amino-acid chain: Translation initiation factor IF-1 (72 aa).

Residues 1–72 (MAKDDVIEIQ…TKGRITYRFK (72 aa)) enclose the S1-like domain.

This sequence belongs to the IF-1 family. In terms of assembly, component of the 30S ribosomal translation pre-initiation complex which assembles on the 30S ribosome in the order IF-2 and IF-3, IF-1 and N-formylmethionyl-tRNA(fMet); mRNA recruitment can occur at any time during PIC assembly.

The protein localises to the cytoplasm. Its function is as follows. One of the essential components for the initiation of protein synthesis. Stabilizes the binding of IF-2 and IF-3 on the 30S subunit to which N-formylmethionyl-tRNA(fMet) subsequently binds. Helps modulate mRNA selection, yielding the 30S pre-initiation complex (PIC). Upon addition of the 50S ribosomal subunit IF-1, IF-2 and IF-3 are released leaving the mature 70S translation initiation complex. The sequence is that of Translation initiation factor IF-1 from Lacticaseibacillus paracasei (strain ATCC 334 / BCRC 17002 / CCUG 31169 / CIP 107868 / KCTC 3260 / NRRL B-441) (Lactobacillus paracasei).